Reading from the N-terminus, the 136-residue chain is Holo-[acyl-carrier-protein] synthase (136 aa).

Mg(2+)-binding residues include aspartate 7 and glutamate 53.

It belongs to the P-Pant transferase superfamily. AcpS family. Mg(2+) serves as cofactor.

It localises to the cytoplasm. The catalysed reaction is apo-[ACP] + CoA = holo-[ACP] + adenosine 3',5'-bisphosphate + H(+). Transfers the 4'-phosphopantetheine moiety from coenzyme A to a Ser of acyl-carrier-protein. This is Holo-[acyl-carrier-protein] synthase from Roseiflexus castenholzii (strain DSM 13941 / HLO8).